A 143-amino-acid chain; its full sequence is Histone H2A.z (143 aa).

The protein belongs to the histone H2A family. In terms of assembly, the nucleosome is a histone octamer containing two molecules each of H2A, H2B, H3 and H4 assembled in one H3-H4 heterotetramer and two H2A-H2B heterodimers. The octamer wraps approximately 147 bp of DNA.

Its subcellular location is the nucleus. The protein localises to the chromosome. In terms of biological role, core component of nucleosome which plays a central role in DNA double strand break (DSB) repair. Nucleosomes wrap and compact DNA into chromatin, limiting DNA accessibility to the cellular machineries which require DNA as a template. Histones thereby play a central role in transcription regulation, DNA repair, DNA replication and chromosomal stability. DNA accessibility is regulated via a complex set of post-translational modifications of histones, also called histone code, and nucleosome remodeling. The protein is Histone H2A.z (H2AZ) of Dictyostelium discoideum (Social amoeba).